The following is a 68-amino-acid chain: Conotoxin Lp5.2 (68 aa).

The first 19 residues, 1–19 (MRCVPVFIILLLLASPAAP), serve as a signal peptide directing secretion. The propeptide occupies 20 to 54 (KSLETRIQNDLIRAGLTDADLKTEKGFLSGLLNVA).

Belongs to the conotoxin T superfamily. In terms of processing, contains 2 disulfide bonds that can be either 'C1-C3, C2-C4' or 'C1-C4, C2-C3', since these disulfide connectivities have been observed for conotoxins with cysteine framework V (for examples, see AC P0DQQ7 and AC P81755). As to expression, expressed by the venom duct.

The protein resides in the secreted. The chain is Conotoxin Lp5.2 from Conus leopardus (Leopard cone).